Here is a 112-residue protein sequence, read N- to C-terminus: Transmembrane protein 14C (112 aa).

Transmembrane regions (helical) follow at residues 7-27, 32-52, 62-82, and 86-106; these read VVPLHWFGFGYAALVASGGII, AGSVPSLAAGLLFGSLASLGA, VWVFLATSGTLAGIMGMRFYH, and FMPAGLIAGASLLMVAKVGVS.

Belongs to the TMEM14 family.

The protein resides in the mitochondrion membrane. Its function is as follows. Required for normal heme biosynthesis. The sequence is that of Transmembrane protein 14C (TMEM14C) from Pongo abelii (Sumatran orangutan).